A 53-amino-acid polypeptide reads, in one-letter code: Beta-defensin C7 (53 aa).

3 cysteine pairs are disulfide-bonded: Cys-20-Cys-49, Cys-27-Cys-42, and Cys-32-Cys-50.

Belongs to the beta-defensin family.

It localises to the secreted. In terms of biological role, has bactericidal activity. The sequence is that of Beta-defensin C7 from Bos taurus (Bovine).